The chain runs to 91 residues: DNA/RNA-binding protein Alba (91 aa).

Lys11 carries the post-translational modification N6-acetyllysine.

It belongs to the histone-like Alba family. Acetylated. Acetylation at Lys-11 decreases DNA-binding affinity.

The protein resides in the cytoplasm. It localises to the chromosome. Functionally, binds double-stranded DNA tightly but without sequence specificity. Incubation with DNA in vitro gives fibrous structures 10.3 +/- 1.1 nm in thickness (naked DNA is 1.83 +/- 0.37 nm). This protein does not significantly compact DNA. In Thermococcus kodakarensis (strain ATCC BAA-918 / JCM 12380 / KOD1) (Pyrococcus kodakaraensis (strain KOD1)), this protein is DNA/RNA-binding protein Alba.